The primary structure comprises 112 residues: Iron-sulfur cluster assembly protein CyaY (112 aa).

This sequence belongs to the frataxin family.

Its function is as follows. Involved in iron-sulfur (Fe-S) cluster assembly. May act as a regulator of Fe-S biogenesis. The protein is Iron-sulfur cluster assembly protein CyaY of Delftia acidovorans (strain DSM 14801 / SPH-1).